Here is a 1117-residue protein sequence, read N- to C-terminus: MLAGRPGTRSAVGELGTESSDNLDRAPLGPRESGGHHRPGSYLDMKIHLEKNLEEERQILLQQQKICRNRARKYFVESNRRKKAFEEKRKEQEEKEHQIREQILQQRKQKFEEVTEKFQRAHVPLSQRRKAVSRKPVPPLEEALKQIQESNLKSEVNLPFSRRPTINWRAIDSALPSALSKNDHKHQKQLLSKINCEKEMNENMRATLATSKNVFQLKLEETQKLLEDQHLSNLQKFCDEVNQITNSETLSSIDSLEATEHEEIYLTLNKEHSTSIQRNTISLKPANMQSTNLSCFDEDKLAFSKTQHINNWLTNLDASNTQNVTAFSDILSKSNVLPSWEYFNSKEQNPSPLNGTVERATNTANNSVPFVSSPPMFVLDKKCEKTSETSTMRTTDSTSGAFKRERPLVTESPTFKFSKSQSTSDSLTQEVATFPDQEKYSELNQENGTTSIPTSCVPVATPLVLPSNIQSARPSAKNSIHIKEIDAVQCSDKLDELKDGKEEEIKYFNCNKEELPLFSDSFQDAYIPHNPDSKDEKQKLAETSSLSNVTSNYDFVGQHKKMKYNIHERNGVRFLKSILKKESKYEHGYLKALIINQSFKFGNQKAAAIRDSIELTKEKGAEIPKTIKKLRWFDETSNIENNAENSHSLKNKTGTTQQHSQQFHIQSGAGSNIISVSTCAVNSADTKKSREDSISENVTTLGGSGADHMPLNCFIPSGYNFAKHAWPASKKEESKIPVHDDSKTKQGKPQRGRAKIIRKPGSAKVQSGFICTNRKGAVIQPQSASKVNIFTQAQGKLIIPCPPPQSTSNIRSGKNIQVSQCQPVTPENPQNIITHNSFNSKHVLPTEHSLNQWNQESSSPLSNACSDLVTVIPSLPSYCSSECQTFAKINHSNGTQAVARQDATLYCTQRSPVCEESYPSVTLRTAEEESVPLWKRGPNVLHQNKRATGSTVMRRKRIAETKRRNILEQKRQNPGSVGQKYSEQINNFGQSVLLSSSEPKQTTRGTSYIEEVSDSTSEFLMAENLVKASVPEDEILTVLNSKQIQKSNLPLNKTQQFNICTLSAEEQKILESLNDLSERLHYIQESICKNPSIKNTLQIIPLLEKREDRTSSCRDKR.

Residues 1–42 form a disordered region; the sequence is MLAGRPGTRSAVGELGTESSDNLDRAPLGPRESGGHHRPGSY. The stretch at 49–121 forms a coiled coil; that stretch reads LEKNLEEERQ…EEVTEKFQRA (73 aa). Disordered stretches follow at residues 643–664 and 730–759; these read AENS…QQFH and KKEE…IIRK. The segment covering 730-744 has biased composition (basic and acidic residues); the sequence is KKEESKIPVHDDSKT. Over residues 745-758 the composition is skewed to basic residues; sequence KQGKPQRGRAKIIR.

As to quaternary structure, interacts with DCTN1. As to expression, expressed in brain, lung, skeletal muscle, kidney, pancreas, testis and ovary.

It localises to the midbody. The protein resides in the cytoplasm. Its subcellular location is the cytoskeleton. The protein localises to the microtubule organizing center. It is found in the centrosome. It localises to the cilium basal body. In terms of biological role, participates in cytokinesis. Necessary for microtubules and mitotic spindle organization. Involved in primary cilium formation. This chain is Centrosomal protein of 126 kDa, found in Homo sapiens (Human).